Here is a 433-residue protein sequence, read N- to C-terminus: Sulfhydrylase FUB7 (433 aa).

At Lys-211 the chain carries N6-(pyridoxal phosphate)lysine.

It belongs to the trans-sulfuration enzymes family. Requires pyridoxal 5'-phosphate as cofactor.

It functions in the pathway mycotoxin biosynthesis. Sulfhydrylase; part of the gene cluster that mediates the biosynthesis of fusaric acid, a mycotoxin with low to moderate toxicity to animals and humans, but with high phytotoxic properties. L-aspartate is suggested as fusaric acid amino acid precursor that is activated and further processed to O-acetyl-L-homoserine by cluster enzymes aspartate kinase FUB3 and homoserine O-acetyltransferase FUB5, as well as enzymes of the primary metabolism. The polyketide synthase (PKS) FUB1 generates the triketide trans-2-hexenal which is presumptively released by the hydrolase FUB4 and linked to the NRPS-bound amino acid precursor by NAD(P)-dependent dehydrogenase FUB6. FUB1, FUB4, and the non-canonical NRPS Fub8 may form an enzyme complex. Further processing of the NRPS-bound intermediate might be carried out by FUB6 and the O-acetylhomoserine FUB7, enabling a spontaneous electrocyclization to close the carbon backbone of fusaric acid. Dihydrofusaric acid is likely to be released via reduction by the thioester reductase (TR) domain of FUB8 whereupon the final oxidation to fusaric acid may (also) be performed by the FMN-dependent dehydrogenase FUB9. The chain is Sulfhydrylase FUB7 from Gibberella moniliformis (strain M3125 / FGSC 7600) (Maize ear and stalk rot fungus).